The primary structure comprises 432 residues: Putative cyclin-F1-4 (432 aa).

Belongs to the cyclin family. Cyclin F subfamily.

This is Putative cyclin-F1-4 (CycF1-4) from Oryza sativa subsp. japonica (Rice).